The following is a 108-amino-acid chain: MSHGKVIAVDNPIIYKALTSSGPVVVDFFATWCGPCRAVAPKVGELSEKYSNVRFIQVDVDKVRSVAHEMNIRAMPTFVLYKDGQPLEKRVVGGNVRELEEMIKSISA.

The region spanning 1–108 (MSHGKVIAVD…LEEMIKSISA (108 aa)) is the Thioredoxin domain. Residues C33 and C36 each act as nucleophile in the active site. Residues C33 and C36 are joined by a disulfide bond.

It belongs to the thioredoxin family.

Its function is as follows. Participates in various redox reactions through the reversible oxidation of its active center dithiol to a disulfide and catalyzes dithiol-disulfide exchange reactions. This is Thioredoxin Asp f 28 from Aspergillus fumigatus (Neosartorya fumigata).